The following is a 400-amino-acid chain: Probable RNA polymerase sigma factor RfaY (400 aa).

The Polymerase core binding motif lies at 62–75 (WQRLAQLHQPASFL). Positions 165-184 (SDAAVRKRLSRARATVRNEL) form a DNA-binding region, H-T-H motif.

The protein belongs to the sigma-70 factor family. ECF subfamily.

Sigma factors are initiation factors that promote the attachment of RNA polymerase to specific initiation sites and are then released. This sigma factor is involved in lipopolysaccharide biosynthesis and pathogenicity. This is Probable RNA polymerase sigma factor RfaY (rfaY) from Xanthomonas campestris pv. campestris (strain ATCC 33913 / DSM 3586 / NCPPB 528 / LMG 568 / P 25).